The primary structure comprises 387 residues: 3-ketoacyl-CoA thiolase (387 aa).

Residue Cys-91 is the Acyl-thioester intermediate of the active site. Active-site proton acceptor residues include His-343 and Cys-373.

Belongs to the thiolase-like superfamily. Thiolase family. Heterotetramer of two alpha chains (FadB) and two beta chains (FadA).

It localises to the cytoplasm. It carries out the reaction an acyl-CoA + acetyl-CoA = a 3-oxoacyl-CoA + CoA. It functions in the pathway lipid metabolism; fatty acid beta-oxidation. In terms of biological role, catalyzes the final step of fatty acid oxidation in which acetyl-CoA is released and the CoA ester of a fatty acid two carbons shorter is formed. The chain is 3-ketoacyl-CoA thiolase from Pectobacterium carotovorum subsp. carotovorum (strain PC1).